We begin with the raw amino-acid sequence, 125 residues long: U11-myrmicitoxin-Ta1a (125 aa).

The N-terminal stretch at 1–21 (MKTVIFILGFAFVAILIPTNG) is a signal peptide. The propeptide occupies 22–91 (ESMADADAMA…RAMAAAYAAA (70 aa)). A disulfide bridge connects residues cysteine 101 and cysteine 124.

Belongs to the formicidae venom precursor-01 superfamily. As to expression, expressed by the venom gland.

Its subcellular location is the secreted. The protein resides in the target cell membrane. In terms of biological role, neurotoxin that causes irreversible rapid flaccid paralysis in blowflies and honeybees upon intrathoracic injection. Causes a quick and irreversible cytolytic effect (at 10 uM) indicating it possibly acts as a pore-forming peptide. Shows only weak effect on aphids (A.pisum) at high doses 24 hours post intrathoracic injection. In vitro, is not cytotoxic on the dipteran S2 Drosophila embryonic cell line. In Tetramorium africanum (Fierce ant), this protein is U11-myrmicitoxin-Ta1a.